The chain runs to 386 residues: O-phospho-L-seryl-tRNA:Cys-tRNA synthase (386 aa).

Residues 89-90 (AR), N196, and 219-221 (SGH) contribute to the pyridoxal 5'-phosphate site. K222 carries the N6-(pyridoxal phosphate)lysine modification.

It belongs to the SepCysS family. As to quaternary structure, homodimer. Interacts with SepRS. Pyridoxal 5'-phosphate serves as cofactor.

The catalysed reaction is O-phospho-L-seryl-tRNA(Cys) + hydrogen sulfide + H(+) = L-cysteinyl-tRNA(Cys) + phosphate. Its function is as follows. Converts O-phospho-L-seryl-tRNA(Cys) (Sep-tRNA(Cys)) to L-cysteinyl-tRNA(Cys) (Cys-tRNA(Cys)). This is O-phospho-L-seryl-tRNA:Cys-tRNA synthase from Methanosarcina mazei (strain ATCC BAA-159 / DSM 3647 / Goe1 / Go1 / JCM 11833 / OCM 88) (Methanosarcina frisia).